The following is a 131-amino-acid chain: Leptin receptor gene-related protein (131 aa).

4 helical membrane passes run 7–27 (LVGL…GCAL), 32–52 (VYWP…HFIA), 69–89 (LAYF…IILA), and 100–120 (GLVL…FLVF).

Belongs to the OB-RGRP/VPS55 family.

It is found in the golgi apparatus membrane. It localises to the endosome membrane. Its function is as follows. Involved in protein trafficking. May be involved in the down-regulation of membrane protein levels. This is Leptin receptor gene-related protein (LEPROT) from Gallus gallus (Chicken).